We begin with the raw amino-acid sequence, 578 residues long: Ribonuclease SLFN12 (578 aa).

Position 368 is a phosphoserine (S368). The mediates interaction with PDE3A stretch occupies residues A551–I560. Residue S573 is modified to Phosphoserine.

Belongs to the Schlafen family. Subgroup II subfamily. As to quaternary structure, homodimer. Interacts with PDE3A; direct low affinity interaction which is stimulated by binding of 17beta-estradiol/E2 to PDE3A and that positively regulates the ribonuclease activity of SLFN12. Interacts with SERPINB12; as part of a pathway regulating cell differentiation. Post-translationally, phosphorylation at Ser-368 and Ser-573 negatively regulates the ribonuclease activity. Dephosphorylation is induced by the interaction with PDE3A and stimulates the rRNA ribonuclease activity.

The protein resides in the nucleus. It is found in the cytoplasm. It localises to the cytosol. Its function is as follows. Ribonuclease which is part of an E2/17beta-estradiol-induced pro-apoptotic signaling pathway. E2 stabilizes the PDE3A/SLFN12 complex in the cytosol, promoting the dephosphorylation of SLFN12 and activating its pro-apoptotic ribosomal RNA/rRNA ribonuclease activity. This apoptotic pathway might be relevant in tissues with high concentration of E2 and be for instance involved in placenta remodeling. May play a role in cell differentiation. The polypeptide is Ribonuclease SLFN12 (Homo sapiens (Human)).